A 489-amino-acid polypeptide reads, in one-letter code: Pluviatolide synthase (489 aa).

The helical transmembrane segment at 6–26 (SVLGLSSTLIIALAITVIFLL) threads the bilayer. C432 lines the heme pocket.

The protein belongs to the cytochrome P450 family. It depends on heme as a cofactor.

The protein localises to the membrane. It catalyses the reaction (-)-matairesinol + reduced [NADPH--hemoprotein reductase] + O2 = (-)-pluviatolide + oxidized [NADPH--hemoprotein reductase] + 2 H2O + H(+). Its pathway is aromatic compound metabolism; phenylpropanoid biosynthesis. Cytochrome P450 involved in the biosynthesis of etoposide, a chemotherapeutic compound of the topoisomerase inhibitor family. Catalyzes the conversion of matairesinol to pluviatolide. The protein is Pluviatolide synthase of Podophyllum peltatum (American mandrake).